Reading from the N-terminus, the 46-residue chain is MNRSGKHLISSIILYPRPSGECISSISLDKQTQATTSPLYFCWREK.

Functionally, required for the development of competence. The sequence is that of Competence protein S (comS) from Bacillus subtilis (strain 168).